Reading from the N-terminus, the 280-residue chain is uncharacterized protein (280 aa).

CBS domains lie at 10–67 (QNKK…GSKY), 90–146 (MEEN…KIDE), 154–209 (ITRD…DWAF), and 229–280 (MKRD…KYFA).

This is an uncharacterized protein from Methanocaldococcus jannaschii (strain ATCC 43067 / DSM 2661 / JAL-1 / JCM 10045 / NBRC 100440) (Methanococcus jannaschii).